Here is a 20-residue protein sequence, read N- to C-terminus: KTGVNKPELLPKEETTVIDV.

Residues 1–20 (KTGVNKPELLPKEETTVIDV) are disordered. Basic and acidic residues predominate over residues 9 to 20 (LLPKEETTVIDV).

The protein localises to the plastid. It localises to the chloroplast thylakoid lumen. The protein is Thylakoid lumenal 14.7 kDa protein of Spinacia oleracea (Spinach).